Consider the following 776-residue polypeptide: MVPLRSFVLLNSLFLVLLAARTVVTRVIDKDNSDRIVKTQNDQNLSKVPFNLEETYTADFLAYVFNGTWTSDTTIVYTDRRTGDILQFDVIKQRSTLIVDSSVMDAYIVSNYVLSPKGRYLLIGYDLKKGYRYSTFMRYVIYDIEHRAYHKIGNDMHIALAKWAPLTDDLIYILDNDIYYMRFSNNGFNDVQRVTYDGISGIVYNGVPDWVYEEEVLQDSSAIWFSPDGNHLAYASFDDRNVQEILYLHYGEPGNLDDQYPTEVKIKYPKVGTLNPVVSLTLVDLHDPTLNKIDLKAPHYAVGTDNLLYNVQWKDFDHVVVTWSNRVQNKTEIVWYNMYGEIVKTLHVVEHKGWLDIKHLFFYKGSVYIRKLQPSGTKAGRFHHVTRYDETFKQSPTQMDLTPDAIEVQNICTIDQSNGRIYYLASGLGKPSQKNLYSVPADGSEKPTCISCNVLTPEGNVCTYADAIFSPLGQYYVLVCHGPDPAFVSIFNNAHQKVYSWENNLSLRKKLAKRHLPLVKDLDVRANGYESKVRLFLPHNFDESKSYPMLVNVYAGPNTLKIIDAASYGHQVYMTTNRSVIYAYIDGRGSSNKGSKMLFSIYRKLGTVEVEDQITVTRQLQEMFPWIDSKRTGVWGWSYGGFSTAMILAKDTSFVFKCGIAIAPVSSWIYYDSIYTERFMGFPTPEDNLSGYNETDVSRRVEDIRGKKFMLIHGSGDDNVHYQQSLALAKALEKADVMFEQITYTDEAHALFGVLPHLYHTMDRFWSDCFSLSHAH.

A signal peptide spans 1 to 25; that stretch reads MVPLRSFVLLNSLFLVLLAARTVVT. Residues N44, N66, and N329 are each glycosylated (N-linked (GlcNAc...) asparagine). 2 disulfide bridges follow: C449/C452 and C462/C480. N-linked (GlcNAc...) asparagine glycans are attached at residues N504 and N577. S638 functions as the Charge relay system in the catalytic mechanism. The cysteines at positions 658 and 769 are disulfide-linked. 2 N-linked (GlcNAc...) asparagine glycosylation sites follow: N688 and N693. Residues D717 and H749 each act as charge relay system in the active site.

This sequence belongs to the peptidase S9B family. DPPIV subfamily. As to expression, expressed by the venom gland.

The protein localises to the secreted. The catalysed reaction is Release of an N-terminal dipeptide, Xaa-Yaa-|-Zaa-, from a polypeptide, preferentially when Yaa is Pro, provided Zaa is neither Pro nor hydroxyproline.. Its activity is regulated as follows. Inhibited by diprotin A. Venom dipeptidyl-peptidase which removes N-terminal dipeptides sequentially from polypeptides having unsubstituted N-termini provided that the penultimate residue is proline. May process venom proteins into their active forms and/or modulate the chemotactic activity of immune cells after the insect sting. The sequence is that of Venom dipeptidyl peptidase 4 from Vespula vulgaris (Yellow jacket).